The primary structure comprises 277 residues: Probable endonuclease 4 (277 aa).

9 residues coordinate Zn(2+): H69, H109, E145, D179, H182, H214, D227, H229, and E259.

This sequence belongs to the AP endonuclease 2 family. The cofactor is Zn(2+).

The catalysed reaction is Endonucleolytic cleavage to 5'-phosphooligonucleotide end-products.. Its function is as follows. Endonuclease IV plays a role in DNA repair. It cleaves phosphodiester bonds at apurinic or apyrimidinic (AP) sites, generating a 3'-hydroxyl group and a 5'-terminal sugar phosphate. The protein is Probable endonuclease 4 of Bacteroides thetaiotaomicron (strain ATCC 29148 / DSM 2079 / JCM 5827 / CCUG 10774 / NCTC 10582 / VPI-5482 / E50).